Consider the following 560-residue polypeptide: MASPVLLLKEGTSRTTGRDALRNNILAAKTLAEMLRSSLGPKGLDKMLIDSFGDVTITNDGATIVKDMEIQHPAAKLLVEAAKAQDAEVGDGTTSAVVLAGALLEKAESLLDQNIHPTIIIEGYKKAYTKALELLPQLGTRIDIRDLNSSVARDTLRKIAFTTLASKFIAEGAELNKIIDMVIDAIVNVAEPLPNGGYNVSLDLIKIDKKKGGSIEDSVLVKGLVLDKEVVHPGMPRRVTKAKIAVLDAALEVEKPEISAKISITSPEQIKAFLDEESKYLKDMVDKLASIGANVVICQKGIDDIAQHFLAKKGILAVRRVKRSDIEKLEKALGARIISSIKDATPDDLGYAELVEERRVGNDKMVFIEGAKNLKAVNILLRGSNDMALDEAERSINDALHALRNILLEPVILPGGGAIELELAMKLREYARSVGGKEQLAIEAFADALEEIPMILAETAGLEAISALMDLRARHAKGLTNTGVDVIGGKIVDDVYALNIIEPIRVKAQVLKSATEAATAILKIDDLIAAAPLKSEKKGGEGSKEESGGEGGAGTPSLGD.

The span at 535 to 547 (SEKKGGEGSKEES) shows a compositional bias: basic and acidic residues. Residues 535–560 (SEKKGGEGSKEESGGEGGAGTPSLGD) form a disordered region.

The protein belongs to the TCP-1 chaperonin family. Forms a heterooligomeric complex of two stacked nine-membered rings; one of alpha and the other of beta subunits. Sometimes called a 'rosettasome'.

The protein localises to the cytoplasm. The catalysed reaction is ATP + H2O = ADP + phosphate + H(+). In terms of biological role, molecular chaperone; binds unfolded polypeptides in vitro, stimulates protein folding and has ATPase activity. One of the most abundant proteins in the cell at all temperatures. The polypeptide is Thermosome subunit alpha (thsA) (Saccharolobus shibatae (strain ATCC 51178 / DSM 5389 / JCM 8931 / NBRC 15437 / B12) (Sulfolobus shibatae)).